The sequence spans 432 residues: C2H2 type master regulator of conidiophore development brlA (432 aa).

Disordered stretches follow at residues 22 to 72 (SNEC…RTPG) and 238 to 260 (KQHSPTTPIRSCSLGTGSGADTP). Low complexity predominate over residues 29–44 (TSSFSPLESPTPTPTS). 2 stretches are compositionally biased toward polar residues: residues 62–72 (LPNNTYERTPG) and 238–252 (KQHSPTTPIRSCSLG). C2H2-type zinc fingers lie at residues 320–344 (FKCKEPGCNGRFKRQEHLKRHMKSH) and 350–375 (HVCWVPGCHRAFSRSDNLNAHYTKTH). Positions 388–432 (LDENSPDYDPEFRGQLTPDGRPIYGSKLDDPIPGAGDMSLDGWDE) are disordered.

It localises to the nucleus. Functionally, brlA, abaA and wetA are pivotal regulators of conidiophore development and conidium maturation. They act individually and together to regulate their own expression and that of numerous other sporulation-specific genes. Binds promoters of target genes at brlA response elements (BREs) containing the conserved sequence 5'-(C/A)(A/G)AGGG(G/A)-3'. Controls the expression of the conidiophore-specific phenol oxidase ivoB. Controls the expression of the hydrophobin rodA. Mediates the developmental switch from the indeterminate, apical growth pattern of vegetative cells to the budding growth pattern of conidiophores. Expression of brlA leads to activation of abaA, wetA and stuA, cessation of vegetative growth, cellular vacuolization and spore formation. In Emericella nidulans (strain FGSC A4 / ATCC 38163 / CBS 112.46 / NRRL 194 / M139) (Aspergillus nidulans), this protein is C2H2 type master regulator of conidiophore development brlA.